The primary structure comprises 423 residues: Adenylosuccinate synthetase (423 aa).

GTP is bound by residues 11-17 (GDEGKGK) and 39-41 (GHT). Asp-12 serves as the catalytic Proton acceptor. Asp-12 and Gly-39 together coordinate Mg(2+). IMP is bound by residues 12-15 (DEGK), 37-40 (NAGH), Thr-127, Arg-141, Gln-223, Thr-238, and Arg-302. Catalysis depends on His-40, which acts as the Proton donor. A substrate-binding site is contributed by 298 to 304 (TTTGRSR). GTP is bound by residues Arg-304, 330-332 (KLD), and 412-414 (SVG).

The protein belongs to the adenylosuccinate synthetase family. Homodimer. The cofactor is Mg(2+).

Its subcellular location is the cytoplasm. It carries out the reaction IMP + L-aspartate + GTP = N(6)-(1,2-dicarboxyethyl)-AMP + GDP + phosphate + 2 H(+). The protein operates within purine metabolism; AMP biosynthesis via de novo pathway; AMP from IMP: step 1/2. Functionally, plays an important role in the de novo pathway of purine nucleotide biosynthesis. Catalyzes the first committed step in the biosynthesis of AMP from IMP. The protein is Adenylosuccinate synthetase of Methanococcoides burtonii (strain DSM 6242 / NBRC 107633 / OCM 468 / ACE-M).